Reading from the N-terminus, the 296-residue chain is MDKTISVIGMPMDLGQARRGVDMGPSAIRYAHLIERLSDMGYTVEDLGDIPINREKIKNDEELKNLNSVLAGNEKLAQKVNKVIEEKKFPLVLGGDHSIAIGTLAGTAKHYDNLGVIWYDAHGDLNTLETSPSGNIHGMPLAVSLGIGHESLVNLEGYAPKIKPENVVIIGARSLDEGERKYIKESGMKVYTMHEIDRLGMTKVIEETLDYLSACDGVHLSLDLDGLDPNDAPGVGTPVVGGISYRESHLAMEMLYDAGIITSAEFVEVNPILDHKNKTGKTAVELVESLLGKKLL.

Residues H97, D120, H122, and D124 each coordinate Mn(2+). Residues 122 to 126, 133 to 135, and D176 each bind substrate; these read HGDLN and SGN. D223 and D225 together coordinate Mn(2+). The substrate site is built by T237 and E268.

The protein belongs to the arginase family. Requires Mn(2+) as cofactor.

It catalyses the reaction L-arginine + H2O = urea + L-ornithine. Its pathway is nitrogen metabolism; urea cycle; L-ornithine and urea from L-arginine: step 1/1. Its function is as follows. Involved in the catabolism of arginine. This chain is Arginase, found in Bacillus subtilis (strain 168).